The chain runs to 352 residues: Galactokinase (352 aa).

Position 14 to 17 (Glu14 to Asp17) interacts with substrate. ATP contacts are provided by residues Ser46 and Gly96 to Ser102. Positions 102 and 134 each coordinate Mg(2+). Asp146 serves as the catalytic Proton acceptor. Tyr196 serves as a coordination point for substrate.

The protein belongs to the GHMP kinase family. GalK subfamily.

It is found in the cytoplasm. It carries out the reaction alpha-D-galactose + ATP = alpha-D-galactose 1-phosphate + ADP + H(+). The protein operates within carbohydrate metabolism; galactose metabolism. Catalyzes the transfer of the gamma-phosphate of ATP to D-galactose to form alpha-D-galactose-1-phosphate (Gal-1-P). The polypeptide is Galactokinase (Thermosipho africanus (strain TCF52B)).